The primary structure comprises 461 residues: RNA-binding protein ZCH321 (461 aa).

2 C3H1-type zinc fingers span residues 63 to 85 (LCQL…HAAL) and 181 to 208 (ACDF…HICK). The tract at residues 224-243 (TSQARDGGEPGPRGAKKGSV) is disordered. Residues 446–451 (WQHNPY) carry the MKT1-binding motif motif.

In terms of biological role, RNA-binding protein involved in regulation of mRNA stability. Promotes mRNA stabilization by recruiting MKT1 and PBP1. Stabilizes transcripts encoding mitochondrial proteins. This Trypanosoma brucei brucei (strain 927/4 GUTat10.1) protein is RNA-binding protein ZCH321.